We begin with the raw amino-acid sequence, 100 residues long: Protein RADIALIS-like 1 (100 aa).

Residues 9-64 form the SANT domain; it reads QSSGSWTAKQNKAFEQALATYDQDTPNRWQNVAKVVGGKTTEEVKRHYELLVQDIN. A disordered region spans residues 73–100; sequence FPNYRTSGGCTNGRLSQEEKRMRNMRLQ. Residues 76–87 are compositionally biased toward polar residues; the sequence is YRTSGGCTNGRL.

The protein resides in the nucleus. In terms of biological role, probable transcription factor. This chain is Protein RADIALIS-like 1 (RL1), found in Arabidopsis thaliana (Mouse-ear cress).